Here is a 396-residue protein sequence, read N- to C-terminus: Pinosylvin synthase 2 (396 aa).

Residue 60–63 (KFKR) participates in substrate binding. Cys-170 is a catalytic residue. Residues Leu-273 and 311 to 313 (GGR) contribute to the substrate site.

This sequence belongs to the thiolase-like superfamily. Chalcone/stilbene synthases family. In terms of assembly, homodimer.

Its subcellular location is the cytoplasm. It carries out the reaction (E)-cinnamoyl-CoA + 3 malonyl-CoA + 3 H(+) = (E)-pinosylvin + 4 CO2 + 4 CoA. The enzyme catalyses 3-phenylpropanoyl-CoA + 3 malonyl-CoA + 3 H(+) = dihydropinosylvin + 4 CO2 + 4 CoA. It functions in the pathway phytoalexin biosynthesis; pinosylvin biosynthesis. In terms of biological role, catalyzes the production of pinosylvin from cinnamoyl-CoA and malonyl-CoA, and dihydropinosylvin from dihydrocinnamoyl-CoA. The protein is Pinosylvin synthase 2 of Pinus strobus (Eastern white pine).